Consider the following 248-residue polypeptide: Probable phosphatase VS_II0429 (248 aa).

Histidine 8, histidine 10, histidine 16, histidine 41, glutamate 74, histidine 102, histidine 132, aspartate 194, and histidine 196 together coordinate Zn(2+).

The protein belongs to the PHP family. Zn(2+) serves as cofactor.

The polypeptide is Probable phosphatase VS_II0429 (Vibrio atlanticus (strain LGP32) (Vibrio splendidus (strain Mel32))).